A 344-amino-acid chain; its full sequence is Ferrochelatase (344 aa).

H214 and E295 together coordinate Fe cation.

This sequence belongs to the ferrochelatase family.

The protein localises to the cytoplasm. The enzyme catalyses heme b + 2 H(+) = protoporphyrin IX + Fe(2+). Its pathway is porphyrin-containing compound metabolism; protoheme biosynthesis; protoheme from protoporphyrin-IX: step 1/1. Catalyzes the ferrous insertion into protoporphyrin IX. In Rhizobium leguminosarum bv. trifolii (strain WSM2304), this protein is Ferrochelatase.